The following is a 467-amino-acid chain: Ankyrin repeat and SOCS box protein 10 (467 aa).

7 ANK repeats span residues 115–144 (ELTTPLHVAASRGHTEVLRLLLRRRARPDS), 147–176 (GGRTALHEACAAGHTACVHVLLVAGADPNI), 180–209 (DGKRPLHLCRGPGTLECAELLLRFGARVDG), 214–243 (EEETPLHVAARLGHVELADLLLRRGACPDA), 247–289 (EGWT…DADA), 293–322 (DKQRPLHLACRRGHAAVVELLLSCGVSANT), and 326–361 (GGHTPLHCALQGPAAALAQSPEHVVRALLNHGAVRV). One can recognise an SOCS box domain in the interval 412–464 (YSSLFALVRQPRSLQHLSRCALRSHLEGSLPQALPRLPLPPRLLRYLQLDFEG).

The protein belongs to the ankyrin SOCS box (ASB) family. Expressed in the eye. The highest expression is observed in the iris, with moderate levels in the trabecular meshwork (TM), the lamina, and the optic nerve; slightly lower levels in the ciliary body, retina, and choroid; and very low levels in the lens.

It localises to the cytoplasm. Its subcellular location is the nucleus. It functions in the pathway protein modification; protein ubiquitination. Its function is as follows. May be a substrate-recognition component of a SCF-like ECS (Elongin-Cullin-SOCS-box protein) E3 ubiquitin-protein ligase complex which mediates the ubiquitination and subsequent proteasomal degradation of target proteins. The protein is Ankyrin repeat and SOCS box protein 10 (ASB10) of Homo sapiens (Human).